A 194-amino-acid chain; its full sequence is Adenylate kinase (194 aa).

An ATP-binding site is contributed by 8-16; sequence GIPGVGKTT.

Belongs to the archaeal adenylate kinase family.

It localises to the cytoplasm. The enzyme catalyses AMP + ATP = 2 ADP. In Sulfurisphaera tokodaii (strain DSM 16993 / JCM 10545 / NBRC 100140 / 7) (Sulfolobus tokodaii), this protein is Adenylate kinase (adkA).